The following is a 316-amino-acid chain: Retinol dehydrogenase 11 (316 aa).

The chain crosses the membrane as a helical; Signal-anchor for type II membrane protein span at residues 1 to 21 (MFGFLLLLSLPFILYLVTPKI). The Cytoplasmic segment spans residues 22–316 (RKMLSSGVCT…CDLLGLPVDW (295 aa)). Residue 45–51 (GANTGIG) participates in NADP(+) binding. At K109 the chain carries N6-acetyllysine. Residue S174 coordinates substrate. Y199 acts as the Proton acceptor in catalysis.

This sequence belongs to the short-chain dehydrogenases/reductases (SDR) family. Post-translationally, not glycosylated. As to expression, expressed at high level in liver and testis. Expressed at lower levels in smooth muscle, thymus, submaxillary gland and epididymis. In testis, expression is restricted to pachytene spermatocytes. Also expressed in four layers of the retina, including the outer segment of rods and cones.

It localises to the endoplasmic reticulum membrane. It carries out the reaction all-trans-retinol + NADP(+) = all-trans-retinal + NADPH + H(+). The catalysed reaction is 11-cis-retinol + NADP(+) = 11-cis-retinal + NADPH + H(+). The enzyme catalyses 9-cis-retinol + NADP(+) = 9-cis-retinal + NADPH + H(+). It catalyses the reaction 13-cis-retinol + NADP(+) = 13-cis-retinal + NADPH + H(+). It carries out the reaction a medium-chain primary fatty alcohol + NADP(+) = a medium-chain fatty aldehyde + NADPH + H(+). The catalysed reaction is (2E,6Z)-nona-2,6-dien-1-ol + NADP(+) = (2E,6Z)-nona-2,6-dienal + NADPH + H(+). The enzyme catalyses (E)-oct-2-en-1-ol + NADP(+) = (2E)-octenal + NADPH + H(+). It catalyses the reaction (E)-non-2-en-1-ol + NADP(+) = (E)-non-2-enal + NADPH + H(+). It carries out the reaction heptan-1-ol + NADP(+) = heptanal + NADPH + H(+). The catalysed reaction is hexan-1-ol + NADP(+) = hexanal + NADPH + H(+). The enzyme catalyses decan-1-ol + NADP(+) = decanal + NADPH + H(+). It catalyses the reaction nonan-1-ol + NADP(+) = nonanal + NADPH + H(+). It carries out the reaction octan-1-ol + NADP(+) = octanal + NADPH + H(+). The catalysed reaction is (Z)-non-6-en-1-ol + NADP(+) = (Z)-non-6-enal + NADPH + H(+). It functions in the pathway cofactor metabolism; retinol metabolism. Its function is as follows. Retinol dehydrogenase with a clear preference for NADP. Displays high activity towards 9-cis, 11-cis and all-trans-retinol, and to a lesser extent on 13-cis-retinol. Also exhibits reductive activity towards toxic lipid peroxidation products such as medium-chain aldehydes trans-2-nonenal, nonanal, and cis-6-nonenal. Has no dehydrogenase activity towards steroid. Seems to be required for homeostasis of retinol in liver and testis. The polypeptide is Retinol dehydrogenase 11 (Rdh11) (Mus musculus (Mouse)).